The primary structure comprises 302 residues: Urease accessory protein UreG (302 aa).

Basic and acidic residues-rich tracts occupy residues 1 to 32 (MHDPGEHGHGRHDHDHDHDHVHDHDHDHDHVH), 40 to 56 (HEHEHAHEHAHGHEHGH), and 64 to 76 (HAHEHAHGHTHEH). The interval 1–76 (MHDPGEHGHG…EHAHGHTHEH (76 aa)) is disordered. 105–112 (GPVGSGKT) contacts GTP.

This sequence belongs to the SIMIBI class G3E GTPase family. UreG subfamily. Homodimer. UreD, UreF and UreG form a complex that acts as a GTP-hydrolysis-dependent molecular chaperone, activating the urease apoprotein by helping to assemble the nickel containing metallocenter of UreC. The UreE protein probably delivers the nickel.

It localises to the cytoplasm. Functionally, facilitates the functional incorporation of the urease nickel metallocenter. This process requires GTP hydrolysis, probably effectuated by UreG. The chain is Urease accessory protein UreG from Sorangium cellulosum (strain So ce56) (Polyangium cellulosum (strain So ce56)).